We begin with the raw amino-acid sequence, 195 residues long: Endoribonuclease YbeY (195 aa).

Zn(2+)-binding residues include His152, His156, and His162.

Belongs to the endoribonuclease YbeY family. Requires Zn(2+) as cofactor.

It is found in the cytoplasm. Single strand-specific metallo-endoribonuclease involved in late-stage 70S ribosome quality control and in maturation of the 3' terminus of the 16S rRNA. The sequence is that of Endoribonuclease YbeY from Rhodopseudomonas palustris (strain HaA2).